The following is a 491-amino-acid chain: Probable glycine dehydrogenase (decarboxylating) subunit 2 (491 aa).

N6-(pyridoxal phosphate)lysine is present on K273.

Belongs to the GcvP family. C-terminal subunit subfamily. The glycine cleavage system is composed of four proteins: P, T, L and H. In this organism, the P 'protein' is a heterodimer of two subunits. It depends on pyridoxal 5'-phosphate as a cofactor.

It carries out the reaction N(6)-[(R)-lipoyl]-L-lysyl-[glycine-cleavage complex H protein] + glycine + H(+) = N(6)-[(R)-S(8)-aminomethyldihydrolipoyl]-L-lysyl-[glycine-cleavage complex H protein] + CO2. Its function is as follows. The glycine cleavage system catalyzes the degradation of glycine. The P protein binds the alpha-amino group of glycine through its pyridoxal phosphate cofactor; CO(2) is released and the remaining methylamine moiety is then transferred to the lipoamide cofactor of the H protein. This is Probable glycine dehydrogenase (decarboxylating) subunit 2 from Bacillus anthracis (strain A0248).